The primary structure comprises 227 residues: Uracil-DNA glycosylase (227 aa).

Asp68 functions as the Proton acceptor in the catalytic mechanism.

This sequence belongs to the uracil-DNA glycosylase (UDG) superfamily. UNG family.

It is found in the cytoplasm. The catalysed reaction is Hydrolyzes single-stranded DNA or mismatched double-stranded DNA and polynucleotides, releasing free uracil.. In terms of biological role, excises uracil residues from the DNA which can arise as a result of misincorporation of dUMP residues by DNA polymerase or due to deamination of cytosine. The sequence is that of Uracil-DNA glycosylase from Mycobacterium sp. (strain JLS).